A 109-amino-acid chain; its full sequence is Ribonuclease (109 aa).

Catalysis depends on glutamate 72, which acts as the Proton acceptor. The active-site Proton donor is the histidine 101.

It belongs to the ribonuclease N1/T1 family.

It localises to the secreted. Its function is as follows. Hydrolyzes phosphodiester bonds in RNA, poly- and oligoribonucleotides resulting in 3'-nucleoside monophosphates via 2',3'-cyclophosphate intermediates. The polypeptide is Ribonuclease (Heyndrickxia coagulans (Weizmannia coagulans)).